We begin with the raw amino-acid sequence, 256 residues long: Ubiquinone biosynthesis O-methyltransferase (256 aa).

Positions 44, 80, 101, and 144 each coordinate S-adenosyl-L-methionine.

Belongs to the methyltransferase superfamily. UbiG/COQ3 family.

It carries out the reaction a 3-demethylubiquinol + S-adenosyl-L-methionine = a ubiquinol + S-adenosyl-L-homocysteine + H(+). The enzyme catalyses a 3-(all-trans-polyprenyl)benzene-1,2-diol + S-adenosyl-L-methionine = a 2-methoxy-6-(all-trans-polyprenyl)phenol + S-adenosyl-L-homocysteine + H(+). It functions in the pathway cofactor biosynthesis; ubiquinone biosynthesis. In terms of biological role, O-methyltransferase that catalyzes the 2 O-methylation steps in the ubiquinone biosynthetic pathway. In Methylocella silvestris (strain DSM 15510 / CIP 108128 / LMG 27833 / NCIMB 13906 / BL2), this protein is Ubiquinone biosynthesis O-methyltransferase.